The sequence spans 119 residues: Large ribosomal subunit protein uL18 (119 aa).

This sequence belongs to the universal ribosomal protein uL18 family. In terms of assembly, part of the 50S ribosomal subunit; part of the 5S rRNA/L5/L18/L25 subcomplex. Contacts the 5S and 23S rRNAs.

In terms of biological role, this is one of the proteins that bind and probably mediate the attachment of the 5S RNA into the large ribosomal subunit, where it forms part of the central protuberance. In Cereibacter sphaeroides (strain ATCC 17025 / ATH 2.4.3) (Rhodobacter sphaeroides), this protein is Large ribosomal subunit protein uL18.